Here is a 180-residue protein sequence, read N- to C-terminus: ATP-dependent protease subunit HslV (180 aa).

Threonine 5 is a catalytic residue. Glycine 165, cysteine 168, and threonine 171 together coordinate Na(+).

Belongs to the peptidase T1B family. HslV subfamily. In terms of assembly, a double ring-shaped homohexamer of HslV is capped on each side by a ring-shaped HslU homohexamer. The assembly of the HslU/HslV complex is dependent on binding of ATP.

It localises to the cytoplasm. The enzyme catalyses ATP-dependent cleavage of peptide bonds with broad specificity.. With respect to regulation, allosterically activated by HslU binding. Its function is as follows. Protease subunit of a proteasome-like degradation complex believed to be a general protein degrading machinery. This is ATP-dependent protease subunit HslV from Helicobacter pylori (strain ATCC 700392 / 26695) (Campylobacter pylori).